A 551-amino-acid chain; its full sequence is Cleavage and polyadenylation specificity factor subunit 6 (551 aa).

Residues 81 to 161 (IALYIGNLTW…QNPVVTPCNK (81 aa)) enclose the RRM domain. Residue Thr-157 is modified to Phosphothreonine. Positions 169 to 180 (MQSRKTTQSGQM) are enriched in polar residues. Disordered regions lie at residues 169–410 (MQSR…TPLS) and 477–551 (LHGI…YRHR). Pro residues-rich tracts occupy residues 237–265 (TRPPLGPPGPPGPPGPPPPGQVLPPPLAG), 285–366 (GQPP…PPPA), and 377–388 (GPPPTDPYGRPP). Basic and acidic residues-rich tracts occupy residues 389–404 (PYDRGDYGPPGREMDA) and 489–503 (SRRERSRERDHSRSR). Phosphoserine is present on residues Ser-494, Ser-500, Ser-511, Ser-513, and Ser-525. Positions 504–514 (EKSRRHKSRSR) are enriched in basic residues. The segment covering 515–551 (DRHDDYYRERSRERERHRDRDRDRDRERDREREYRHR) has biased composition (basic and acidic residues).

This sequence belongs to the RRM CPSF6/7 family. In terms of assembly, component of the cleavage factor Im (CFIm) complex.

The protein resides in the nucleus. It localises to the nucleoplasm. The protein localises to the nucleus speckle. It is found in the cytoplasm. Functionally, component of the cleavage factor Im (CFIm) complex that functions as an activator of the pre-mRNA 3'-end cleavage and polyadenylation processing required for the maturation of pre-mRNA into functional mRNAs. CFIm contributes to the recruitment of multiprotein complexes on specific sequences on the pre-mRNA 3'-end, so called cleavage and polyadenylation signals (pA signals). Most pre-mRNAs contain multiple pA signals, resulting in alternative cleavage and polyadenylation (APA) producing mRNAs with variable 3'-end formation. The CFIm complex acts as a key regulator of cleavage and polyadenylation site choice during APA through its binding to 5'-UGUA-3' elements localized in the 3'-untranslated region (UTR) for a huge number of pre-mRNAs. Plays a role in mRNA export. The polypeptide is Cleavage and polyadenylation specificity factor subunit 6 (Gallus gallus (Chicken)).